Reading from the N-terminus, the 409-residue chain is Elongation factor Tu (409 aa).

Residues 10 to 214 (KPHANIGTIG…EVDAYIPTPE (205 aa)) form the tr-type G domain. Residues 19–26 (GHVDHGKT) are G1. 19–26 (GHVDHGKT) contacts GTP. Threonine 26 contacts Mg(2+). Residues 60 to 64 (GITIN) form a G2 region. The tract at residues 81-84 (DCPG) is G3. GTP-binding positions include 81 to 85 (DCPGH) and 136 to 139 (NKED). The segment at 136–139 (NKED) is G4. The tract at residues 174-176 (SAL) is G5.

The protein belongs to the TRAFAC class translation factor GTPase superfamily. Classic translation factor GTPase family. EF-Tu/EF-1A subfamily. In terms of assembly, monomer.

Its subcellular location is the cytoplasm. It carries out the reaction GTP + H2O = GDP + phosphate + H(+). Its function is as follows. GTP hydrolase that promotes the GTP-dependent binding of aminoacyl-tRNA to the A-site of ribosomes during protein biosynthesis. The polypeptide is Elongation factor Tu (Synechococcus elongatus (strain ATCC 33912 / PCC 7942 / FACHB-805) (Anacystis nidulans R2)).